The chain runs to 697 residues: Potassium-transporting ATPase ATP-binding subunit (697 aa).

Transmembrane regions (helical) follow at residues Pro-55–Ser-75, Gly-82–Ala-102, Leu-245–Phe-265, and Val-271–Ile-291. Asp-324 serves as the catalytic 4-aspartylphosphate intermediate. Residues Asp-361, Glu-365, Phe-393–Ser-400, and Lys-412 each bind ATP. The Mg(2+) site is built by Asp-535 and Asp-539. Transmembrane regions (helical) follow at residues Phe-605–Met-625, Ala-633–Met-653, and Gly-677–Ile-697.

Belongs to the cation transport ATPase (P-type) (TC 3.A.3) family. Type IA subfamily. The system is composed of three essential subunits: KdpA, KdpB and KdpC.

Its subcellular location is the cell membrane. The enzyme catalyses K(+)(out) + ATP + H2O = K(+)(in) + ADP + phosphate + H(+). Its function is as follows. Part of the high-affinity ATP-driven potassium transport (or Kdp) system, which catalyzes the hydrolysis of ATP coupled with the electrogenic transport of potassium into the cytoplasm. This subunit is responsible for energy coupling to the transport system and for the release of the potassium ions to the cytoplasm. This chain is Potassium-transporting ATPase ATP-binding subunit, found in Bacillus mycoides (strain KBAB4) (Bacillus weihenstephanensis).